Consider the following 457-residue polypeptide: ATP-dependent RNA helicase DbpA (457 aa).

The Q motif signature appears at 3 to 31; that stretch reads AFSTLNVLPPAQLTNLNELGYLTMTPVQA. The region spanning 34-205 is the Helicase ATP-binding domain; the sequence is LPAILAGKDV…GRVQRDPLAI (172 aa). 47 to 54 provides a ligand contact to ATP; that stretch reads AKTGSGKT. Residues 153 to 156 carry the DEAD box motif; sequence DEAD. The Helicase C-terminal domain maps to 230-376; it reads PLLQRLLSLH…QTPPANSSIA (147 aa). An involved in 23S rRNA binding region spans residues 383 to 457; the sequence is ATLCIDGGKK…GKTCRVRLLK (75 aa).

This sequence belongs to the DEAD box helicase family. DbpA subfamily. In terms of assembly, monomer.

It is found in the cytoplasm. It catalyses the reaction ATP + H2O = ADP + phosphate + H(+). Requires hairpin 92 of 23S rRNA for optimal activity. ATPase activity is stimulated by interaction of the N-terminal domain with RNA. In terms of biological role, DEAD-box RNA helicase involved in the assembly of the 50S ribosomal subunit. Has an RNA-dependent ATPase activity, which is specific for 23S rRNA, and a 3' to 5' RNA helicase activity that uses the energy of ATP hydrolysis to destabilize and unwind short rRNA duplexes. Requires a single-stranded RNA loading site on the 3' side of the substrate helix. The protein is ATP-dependent RNA helicase DbpA of Escherichia coli (strain K12).